Consider the following 364-residue polypeptide: Dual-specificity RNA methyltransferase RlmN (364 aa).

Catalysis depends on Glu-91, which acts as the Proton acceptor. The Radical SAM core domain maps to 97–333 (EDDRGTLCIS…TTTRKTRGDD (237 aa)). The cysteines at positions 104 and 338 are disulfide-linked. Residues Cys-111, Cys-115, and Cys-118 each coordinate [4Fe-4S] cluster. Residues 164–165 (GE), Ser-196, 218–220 (SLH), and Asn-295 each bind S-adenosyl-L-methionine. The active-site S-methylcysteine intermediate is the Cys-338.

The protein belongs to the radical SAM superfamily. RlmN family. It depends on [4Fe-4S] cluster as a cofactor.

The protein localises to the cytoplasm. The enzyme catalyses adenosine(2503) in 23S rRNA + 2 reduced [2Fe-2S]-[ferredoxin] + 2 S-adenosyl-L-methionine = 2-methyladenosine(2503) in 23S rRNA + 5'-deoxyadenosine + L-methionine + 2 oxidized [2Fe-2S]-[ferredoxin] + S-adenosyl-L-homocysteine. It catalyses the reaction adenosine(37) in tRNA + 2 reduced [2Fe-2S]-[ferredoxin] + 2 S-adenosyl-L-methionine = 2-methyladenosine(37) in tRNA + 5'-deoxyadenosine + L-methionine + 2 oxidized [2Fe-2S]-[ferredoxin] + S-adenosyl-L-homocysteine. Functionally, specifically methylates position 2 of adenine 2503 in 23S rRNA and position 2 of adenine 37 in tRNAs. m2A2503 modification seems to play a crucial role in the proofreading step occurring at the peptidyl transferase center and thus would serve to optimize ribosomal fidelity. The protein is Dual-specificity RNA methyltransferase RlmN of Dechloromonas aromatica (strain RCB).